The sequence spans 342 residues: MNKDLLLSSYDYTLANELIANYPTNPKEDARLLVFDRKNKEIFHTTFKNLQDFLPNCAIFFNDTKVIKARIYGNKVSGGKIELFLHQPFLNSHNPLFLAQIKGRVKKDEILYFKKDLKIRVVELLNDGLRKVQFFQNDKTLDTSNLYNLLDKIGHIPLPPYIKREDEKSDLKDYQSIFAKNLGAVAAPTASLHFSETMLENLRKKHEIYHLTLHVGAGTFKSVECENIQEHKMHSEFFNIPQQACEIIDSKQAILGVGTTVTRTIEYYARTKTKSGFCDLFLHPQNPPIRQNHLLTNFHLPKSTLIMLVSAFIGREQCLKLYELAIKEKYRFYSYGDAMLIL.

The protein belongs to the QueA family. Monomer.

It localises to the cytoplasm. The catalysed reaction is 7-aminomethyl-7-carbaguanosine(34) in tRNA + S-adenosyl-L-methionine = epoxyqueuosine(34) in tRNA + adenine + L-methionine + 2 H(+). It functions in the pathway tRNA modification; tRNA-queuosine biosynthesis. Functionally, transfers and isomerizes the ribose moiety from AdoMet to the 7-aminomethyl group of 7-deazaguanine (preQ1-tRNA) to give epoxyqueuosine (oQ-tRNA). This is S-adenosylmethionine:tRNA ribosyltransferase-isomerase from Campylobacter jejuni subsp. jejuni serotype O:6 (strain 81116 / NCTC 11828).